A 184-amino-acid chain; its full sequence is Oligoribonuclease (184 aa).

The region spanning 9–172 is the Exonuclease domain; it reads LIWIDLEMTG…DDIRESIEEL (164 aa). Y130 is a catalytic residue.

The protein belongs to the oligoribonuclease family.

The protein localises to the cytoplasm. Its function is as follows. 3'-to-5' exoribonuclease specific for small oligoribonucleotides. This Actinobacillus pleuropneumoniae serotype 5b (strain L20) protein is Oligoribonuclease.